The primary structure comprises 78 residues: Large ribosomal subunit protein eL20 (78 aa).

It belongs to the eukaryotic ribosomal protein eL20 family. In terms of assembly, part of the 50S ribosomal subunit. Binds 23S rRNA.

The chain is Large ribosomal subunit protein eL20 from Methanothermobacter thermautotrophicus (strain ATCC 29096 / DSM 1053 / JCM 10044 / NBRC 100330 / Delta H) (Methanobacterium thermoautotrophicum).